The chain runs to 137 residues: Probable disulfide formation protein C (137 aa).

A helical transmembrane segment spans residues 6-25; sequence ENLMLGSWLTALTAMLGSLY. A disulfide bridge connects residues C35 and C38. 2 consecutive transmembrane segments (helical) span residues 40–59 and 66–83; these read YQRIIMYPLVLILFIGYLKR and YSLWFSLIGMFTSLYHYS. A disulfide bridge links C97 with C102. Residues 111-133 form a helical membrane-spanning segment; that stretch reads GFVTIPFLAFTAFVIIFICSLLI.

It belongs to the DsbB family. BdbC subfamily.

The protein localises to the cell membrane. Required for disulfide bond formation in some proteins. This Halalkalibacterium halodurans (strain ATCC BAA-125 / DSM 18197 / FERM 7344 / JCM 9153 / C-125) (Bacillus halodurans) protein is Probable disulfide formation protein C.